We begin with the raw amino-acid sequence, 433 residues long: E3 ubiquitin-protein ligase RGLG5 (433 aa).

The interval 1–61 (MGGSSSKESP…SYNSGRQTPK (61 aa)) is disordered. Gly-2 is lipidated: N-myristoyl glycine. The segment covering 22 to 39 (SVSGSSSYSSAWDQSSYY) has biased composition (low complexity). A compositionally biased stretch (polar residues) spans 40 to 61 (QTPNHPSASPVSSYNSGRQTPK). Positions 93–313 (NLIVGIDVTK…KEAEFALSAL (221 aa)) constitute a VWFA domain. The tract at residues 340–383 (IALPPPTYATQSMRNSPRTSRSTSFQNKPYDNGVSSTPPSTTHN) is disordered. The segment covering 347 to 383 (YATQSMRNSPRTSRSTSFQNKPYDNGVSSTPPSTTHN) has biased composition (polar residues). An RING-type zinc finger spans residues 390 to 423 (CPVCLVSAKNMAFNCGHQTCAGCGEDLHVCPICR).

Interacts with PP2CA. In terms of processing, N-myristoylated.

It localises to the cell membrane. The enzyme catalyses S-ubiquitinyl-[E2 ubiquitin-conjugating enzyme]-L-cysteine + [acceptor protein]-L-lysine = [E2 ubiquitin-conjugating enzyme]-L-cysteine + N(6)-ubiquitinyl-[acceptor protein]-L-lysine.. Its function is as follows. Together with RGLG1, mediates the ubiquitination and subsequent proteasomal degradation of the target protein PP2CA. Functions as a positive regulator of abscisic acid (ABA) signaling through ABA-dependent degradation of PP2CA, a major inhibitor of ABA signaling. In Arabidopsis thaliana (Mouse-ear cress), this protein is E3 ubiquitin-protein ligase RGLG5.